The following is a 450-amino-acid chain: Beclin-1 (450 aa).

Met-1 is modified (N-acetylmethionine). 2 positions are modified to phosphoserine: Ser-15 and Ser-30. The interval 48 to 72 is disordered; that stretch reads TTAQAKPGETQEEETNSGEEPFIET. 3 positions are modified to phosphoserine; by AMPK: Ser-90, Ser-93, and Ser-96. The BH3 signature appears at 108 to 127; the sequence is TMENLSRRLKVTGDLFDIMS. The segment at 112–159 is interaction with BCL2 and BCL2L1; sequence LSRRLKVTGDLFDIMSGQTDVDHPLCEECTDTLLDQLDTQLNVTENEC. A Phosphothreonine; by DAPK1 modification is found at Thr-119. Residues 142 to 269 adopt a coiled-coil conformation; the sequence is DTLLDQLDTQ…QLDKLKKTNV (128 aa). The evolutionary conserved domain (ECD) stretch occupies residues 245 to 450; sequence DELKSVENQM…AWVSSQFYNK (206 aa). Glycyl lysine isopeptide (Lys-Gly) (interchain with G-Cter in ubiquitin) cross-links involve residues Lys-402 and Lys-437. The tract at residues 425–450 is required for membrane-association; that stretch reads WTKALKFMLTNLKWGLAWVSSQFYNK.

It belongs to the beclin family. A homodimeric form is proposed to exist; this metastable form readily transits to ATG14- or UVRAG-containing complexes with BECN1:UVRAG being more stable than BECN1:ATG14. Component of the PI3K (PI3KC3/PI3K-III/class III phosphatidylinositol 3-kinase) complex the core of which is composed of the catalytic subunit PIK3C3, the regulatory subunit PIK3R4 and BECN1 associating with additional regulatory/auxiliary subunits to form alternative complex forms. Alternative complex forms containing a fourth regulatory subunit in a mutually exclusive manner are PI3K complex I (PI3KC3-C1) containing ATG14, and PI3K complex II (PI3KC3-C2) containing UVRAG. PI3KC3-C1 displays a V-shaped architecture with PIK3R4 serving as a bridge between PIK3C3 and the ATG14:BECN1 subcomplex. Both, PI3KC3-C1 and PI3KC3-C2, can associate with further regulatory subunits, such as RUBCN, SH3GLB1/Bif-1 and AMBRA1. PI3KC3-C1 probably associates with PIK3CB. Forms a complex with PPP2CA and AMBRA1; AMBRA1 and BECN1 components of the complex regulate MYC stability via different pathways. Component of the complex, at least composed of LRPPRC, BECN1 and BCL2; the interactions prevent BECN1 from forming an autophagy-inducing complex with PIK3C3. Interacts with AMBRA1, GOPC, GRID2. Interacts with BCL2 and BCL2L1 isoform Bcl-X(L); the interaction inhibits BECN1 function in promoting autophagy by interfering with the formation of the PI3K complex. Interacts with cytosolic HMGB1; inhibits the interaction of BECN1 and BCL2 leading to promotion of autophagy. Interacts with USP10, USP13, VMP1, DAPK1, RAB39A. Interacts with the poly-Gln domain of ATXN3; the interaction causes deubiquitination at Lys-402 and stabilizes BECN1. Interacts with SLAMF1. Interacts with TRIM5; the interaction causes activation of BECN1 by causing its dissociation from its inhibitors BCL2 and TAB2. Interacts with active ULK1 (phosphorylated on 'Ser-317') and MEFV simultaneously. Interacts with WDR81 and WDR91; negatively regulates the PI3 kinase/PI3K activity associated with endosomal membranes. Interacts with LAPTM4B; competes with EGFR for LAPTM4B binding; regulates EGFR activity. Interacts with TRIM50. Interacts with TRIM16. Interacts with ATG14; this interaction is increased in the absence of TMEM39A. Interacts with WASHC1; preventing interaction with AMBRA1 and the DCX(AMBRA1) complex and subsequent ubiquitination. Interacts with TRIM17. Interacts with BCL2L10/BCL-B (via BH1 domain). Interacts with SH3BGRL. Interacts with IRGM; enhancing BECN1-interacting partners and influencing the composition of the BECN1 complex. Interacts with ARMC3. Interacts with LRPPRC. In terms of processing, phosphorylation at Thr-119 by DAPK1 reduces its interaction with BCL2 and BCL2L1 and promotes induction of autophagy. In response to autophagic stimuli, phosphorylated at serine residues by AMPK in an ATG14-dependent manner, and this phosphorylation is critical for maximally efficient autophagy. Post-translationally, polyubiquitinated by NEDD4, both with 'Lys-11'- and 'Lys-63'-linkages. 'Lys-11'-linked polyubiquitination leads to degradation and is enhanced when the stabilizing interaction partner VPS34 is depleted. Deubiquitinated by USP10 and USP13, leading to stabilize the PIK3C3/VPS34-containing complexes. Polyubiquitinated at Lys-402 with 'Lys-48'-linkages. 'Lys-48'-linked polyubiquitination of Lys-402 leads to degradation. Deubiquitinated by ATXN3, leading to stabilization. Ubiquitinated at Lys-437 via 'Lys-63'-linkage by the DCX(AMBRA1) complex, thereby increasing the association between BECN1 and PIK3C3 to promote PIK3C3 activity. 'Lys-48'-linked ubiquitination by RNF216 leads to proteasomal degradation and autophagy inhibition. Proteolytically processed by caspases including CASP8 and CASP3; the C-terminal fragments lack autophagy-inducing capacity and are proposed to induce apoptosis. Thus the cleavage is proposed to be an determinant to switch from autophagy to apoptosis pathways affecting cellular homeostasis including viral infections and survival of tumor cells.

The protein localises to the cytoplasm. It is found in the golgi apparatus. It localises to the trans-Golgi network membrane. Its subcellular location is the endosome membrane. The protein resides in the endoplasmic reticulum membrane. The protein localises to the mitochondrion membrane. It is found in the cytoplasmic vesicle. It localises to the autophagosome. Its subcellular location is the mitochondrion. The protein resides in the nucleus. In terms of biological role, plays a central role in autophagy. Acts as a core subunit of the PI3K complex that mediates formation of phosphatidylinositol 3-phosphate; different complex forms are believed to play a role in multiple membrane trafficking pathways: PI3KC3-C1 is involved in initiation of autophagosomes and PI3KC3-C2 in maturation of autophagosomes and endocytosis. Involved in regulation of degradative endocytic trafficking and required for the abscission step in cytokinesis, probably in the context of PI3KC3-C2. Essential for the formation of PI3KC3-C2 but not PI3KC3-C1 PI3K complex forms. Involved in endocytosis. May play a role in antiviral host defense. Functionally, beclin-1-C 35 kDa localized to mitochondria can promote apoptosis; it induces the mitochondrial translocation of BAX and the release of proapoptotic factors. This chain is Beclin-1 (BECN1), found in Pongo abelii (Sumatran orangutan).